Reading from the N-terminus, the 106-residue chain is Large ribosomal subunit protein eL30 (106 aa).

The protein belongs to the eukaryotic ribosomal protein eL30 family.

This chain is Large ribosomal subunit protein eL30, found in Methanococcus maripaludis (strain C5 / ATCC BAA-1333).